The chain runs to 231 residues: Uridylate kinase (231 aa).

9–12 (KLSG) provides a ligand contact to ATP. Gly-49 provides a ligand contact to UMP. ATP contacts are provided by Gly-50 and Arg-54. UMP contacts are provided by residues Asp-69 and 130–137 (AGMPYFST). Residues Asn-158, Tyr-164, and Asp-167 each coordinate ATP.

This sequence belongs to the UMP kinase family. In terms of assembly, homohexamer.

It is found in the cytoplasm. The catalysed reaction is UMP + ATP = UDP + ADP. Its pathway is pyrimidine metabolism; CTP biosynthesis via de novo pathway; UDP from UMP (UMPK route): step 1/1. With respect to regulation, inhibited by UTP. Its function is as follows. Catalyzes the reversible phosphorylation of UMP to UDP. This chain is Uridylate kinase, found in Tropheryma whipplei (strain Twist) (Whipple's bacillus).